We begin with the raw amino-acid sequence, 349 residues long: Protein RecA (349 aa).

Gly-66–Thr-73 provides a ligand contact to ATP.

The protein belongs to the RecA family.

The protein resides in the cytoplasm. Functionally, can catalyze the hydrolysis of ATP in the presence of single-stranded DNA, the ATP-dependent uptake of single-stranded DNA by duplex DNA, and the ATP-dependent hybridization of homologous single-stranded DNAs. It interacts with LexA causing its activation and leading to its autocatalytic cleavage. The chain is Protein RecA from Psychrobacter sp. (strain PRwf-1).